A 429-amino-acid chain; its full sequence is Glutamate-1-semialdehyde 2,1-aminomutase 1 (429 aa).

Lys-268 carries the N6-(pyridoxal phosphate)lysine modification.

The protein belongs to the class-III pyridoxal-phosphate-dependent aminotransferase family. HemL subfamily. As to quaternary structure, homodimer. Requires pyridoxal 5'-phosphate as cofactor.

The protein resides in the cytoplasm. It carries out the reaction (S)-4-amino-5-oxopentanoate = 5-aminolevulinate. It participates in porphyrin-containing compound metabolism; protoporphyrin-IX biosynthesis; 5-aminolevulinate from L-glutamyl-tRNA(Glu): step 2/2. This chain is Glutamate-1-semialdehyde 2,1-aminomutase 1, found in Listeria welshimeri serovar 6b (strain ATCC 35897 / DSM 20650 / CCUG 15529 / CIP 8149 / NCTC 11857 / SLCC 5334 / V8).